The chain runs to 451 residues: 3-phosphoshikimate 1-carboxyvinyltransferase (451 aa).

Residues lysine 30, serine 31, and arginine 35 each contribute to the 3-phosphoshikimate site. Lysine 30 provides a ligand contact to phosphoenolpyruvate. Phosphoenolpyruvate-binding residues include glycine 101 and arginine 130. 3-phosphoshikimate is bound by residues serine 176, serine 177, glutamine 178, aspartate 321, and lysine 348. A phosphoenolpyruvate-binding site is contributed by glutamine 178. Residue aspartate 321 is the Proton acceptor of the active site. Phosphoenolpyruvate is bound by residues arginine 352 and glutamine 422.

This sequence belongs to the EPSP synthase family. As to quaternary structure, monomer.

Its subcellular location is the cytoplasm. It carries out the reaction 3-phosphoshikimate + phosphoenolpyruvate = 5-O-(1-carboxyvinyl)-3-phosphoshikimate + phosphate. It participates in metabolic intermediate biosynthesis; chorismate biosynthesis; chorismate from D-erythrose 4-phosphate and phosphoenolpyruvate: step 6/7. In terms of biological role, catalyzes the transfer of the enolpyruvyl moiety of phosphoenolpyruvate (PEP) to the 5-hydroxyl of shikimate-3-phosphate (S3P) to produce enolpyruvyl shikimate-3-phosphate and inorganic phosphate. In Burkholderia pseudomallei (strain K96243), this protein is 3-phosphoshikimate 1-carboxyvinyltransferase.